The sequence spans 187 residues: NADH-quinone oxidoreductase subunit B (187 aa).

The [4Fe-4S] cluster site is built by Cys66, Cys67, Cys131, and Cys161.

Belongs to the complex I 20 kDa subunit family. As to quaternary structure, NDH-1 is composed of 14 different subunits. Subunits NuoB, C, D, E, F, and G constitute the peripheral sector of the complex. [4Fe-4S] cluster serves as cofactor.

Its subcellular location is the cell inner membrane. The catalysed reaction is a quinone + NADH + 5 H(+)(in) = a quinol + NAD(+) + 4 H(+)(out). Functionally, NDH-1 shuttles electrons from NADH, via FMN and iron-sulfur (Fe-S) centers, to quinones in the respiratory chain. Couples the redox reaction to proton translocation (for every two electrons transferred, four hydrogen ions are translocated across the cytoplasmic membrane), and thus conserves the redox energy in a proton gradient. This chain is NADH-quinone oxidoreductase subunit B, found in Rhizorhabdus wittichii (strain DSM 6014 / CCUG 31198 / JCM 15750 / NBRC 105917 / EY 4224 / RW1) (Sphingomonas wittichii).